Consider the following 271-residue polypeptide: Short-chain dehydrogenase PC-15 (271 aa).

9 residues coordinate NADP(+): isoleucine 8, threonine 34, lysine 40, aspartate 56, asparagine 84, tyrosine 148, lysine 152, valine 181, and threonine 183. The active-site Proton acceptor is tyrosine 148. Lysine 152 serves as the catalytic Lowers pKa of active site Tyr.

This sequence belongs to the short-chain dehydrogenases/reductases (SDR) family.

Its pathway is secondary metabolite biosynthesis. Its function is as follows. Short-chain dehydrogenase; part of the gene cluster that mediates the biosynthesis of the indole diterpenes penitrems. The geranylgeranyl diphosphate (GGPP) synthase penG catalyzes the first step in penitrem biosynthesis via conversion of farnesyl pyrophosphate and isopentyl pyrophosphate into geranylgeranyl pyrophosphate (GGPP). Condensation of indole-3-glycerol phosphate with GGPP by the prenyl transferase penC then forms 3-geranylgeranylindole (3-GGI). Epoxidation by the FAD-dependent monooxygenase penM leads to a epoxidized-GGI that is substrate of the terpene cyclase penB for cyclization to yield paspaline. Paspaline is subsequently converted to 13-desoxypaxilline by the cytochrome P450 monooxygenase penP, the latter being then converted to paxilline by the cytochrome P450 monooxygenase penQ. Paxilline is converted to beta-paxitriol via C-10 ketoreduction by the short-chain dehydrogenase PC-15 which can be monoprenylated at the C-20 by the indole diterpene prenyltransferase penD. A two-step elimination (acetylation and elimination) process performed by the O-acetyltransferase PC-16 and the P.simplicissimum ptmI-ortholog not yet identified in P.crustosum, leads to the production of the prenylated form of penijanthine. The FAD-linked oxidoreductase ptmO then converts the prenylated form of penijanthine into PC-M5 which is in turn transformed into PC-M4 by the aromatic dimethylallyltransferase PC-22. A series of oxidation steps involving 4 cytochrome P450 monooxygenases (PC-21, PC-05, PC-23, PC-20) and a FAD-dependent monooxygenase (PC-14) are required for the transformation of PC-M4 to penitrems A and E. Synthesis of these final products is proposed to proceed via penitrems D and C (PC-21, PC-05, PC-14) and penitrems B and F (PC-21, PC-05, PC-14, PC-23). The polypeptide is Short-chain dehydrogenase PC-15 (Penicillium crustosum (Blue mold fungus)).